We begin with the raw amino-acid sequence, 219 residues long: MLRAGAPTAGSFRTEEVHTGTTIMAVEFDGGVVVGSDSRVSAGTAVVNRVFDKLSPLHQRIFCALSGSAADAQAIADMAAYQLELHGLELEEPPLVLAAANVVKNISYKYREDLLAHLIVAGWDQREGGQVYGTMGGMLIRQPFTISGSGSSYIYGYVDAAYKPGMTPEECRRFTTNAITLAMNRDGSSGGVIYLVTITAAGVDHRVILGDELPKFYDE.

A propeptide spans 1–20 (MLRAGAPTAGSFRTEEVHTG) (removed in mature form). Residue Thr-21 is the Nucleophile of the active site. 2 positions are modified to N6-acetyllysine: Lys-53 and Lys-109.

Belongs to the peptidase T1B family. The 26S proteasome consists of a 20S proteasome core and two 19S regulatory subunits. The 20S proteasome core is composed of 28 subunits that are arranged in four stacked rings, resulting in a barrel-shaped structure. The two end rings are each formed by seven alpha subunits, and the two central rings are each formed by seven beta subunits. The catalytic chamber with the active sites is on the inside of the barrel. Component of the immunoproteasome, where it displaces the equivalent housekeeping subunit PSMB6. Component of the spermatoproteasome, a form of the proteasome specifically found in testis. In terms of processing, autocleaved. The resulting N-terminal Thr residue of the mature subunit is responsible for the nucleophile proteolytic activity.

The protein localises to the cytoplasm. Its subcellular location is the nucleus. It catalyses the reaction Cleavage of peptide bonds with very broad specificity.. Its function is as follows. The proteasome is a multicatalytic proteinase complex which is characterized by its ability to cleave peptides with Arg, Phe, Tyr, Leu, and Glu adjacent to the leaving group at neutral or slightly basic pH. The proteasome has an ATP-dependent proteolytic activity. This subunit is involved in antigen processing to generate class I binding peptides. In Mus musculus bactrianus (Southwestern Asian house mouse), this protein is Proteasome subunit beta type-9 (Psmb9).